The chain runs to 1219 residues: Pheromone-regulated membrane protein 10 (1219 aa).

The segment covering 1–11 (MMRTQSDEHVA) has biased composition (basic and acidic residues). Disordered stretches follow at residues 1-273 (MMRT…IERE), 303-490 (LASF…DPFT), 503-533 (HDDDEDEDNHGNFLTYDAADGSVTPTHEDYV), and 555-713 (EGNK…RPVK). Acidic residues predominate over residues 42–53 (DENDDGHDDSDE). Low complexity predominate over residues 57 to 68 (SVVIPTPSVVIV). The span at 104-115 (LKSPGTPTTYSP) shows a compositional bias: polar residues. The segment covering 136–155 (GSSLSSTTLMNTLLNSSGLG) has biased composition (low complexity). Acidic residues-rich tracts occupy residues 159–171 (TESEEDDDEDEEV) and 219–231 (QEEETVASTDDDG). 3 stretches are compositionally biased toward basic and acidic residues: residues 259–273 (ADRAARADAPLIERE), 330–346 (DDQRDQRDSHLALRREN), and 395–421 (LDRRLEDIKEKRAEDKEKRAEDNEKER). The span at 422 to 432 (QHHHHNHHHHH) shows a compositional bias: basic residues. The segment covering 435 to 446 (ETGPNTGASSPF) has biased composition (polar residues). The segment covering 448–470 (EEEKDREAEEAEILRDQARDLVN) has biased composition (basic and acidic residues). A compositionally biased stretch (low complexity) spans 565 to 577 (TTVGDGTSTGDVS). The segment covering 598 to 615 (KSKTKTTQKLGLKKKKKE) has biased composition (basic residues). Over residues 616–641 (LLKIIEDQRKEKEENKKRPKWYDKSR) the composition is skewed to basic and acidic residues. A compositionally biased stretch (low complexity) spans 642 to 652 (STSPSPGGTPA). The segment covering 653 to 673 (PHHHHHIPGLHLHHHTKGHQR) has biased composition (basic residues). A compositionally biased stretch (basic and acidic residues) spans 693–713 (GGDKPPDRPRSLRSEALRPVK). Transmembrane regions (helical) follow at residues 864–884 (PPWLCVIFFACGTGVVSPYAF), 888–908 (WADIPMCIILGSVVGFFQIIV), 918–938 (VFEVSMSILISFLARAIGTIS), 945–965 (FCFAAIAQGSLAIILPGYIVL), 983–1003 (MFYAVIYSMFLGFGITLGAVV), 1021–1041 (LDPLWRILFVPLYSFFIALVN), 1049–1069 (PSMLLISGAGYTVTYFVGANI), 1075–1095 (SSYLTSAIGAFTIGILGNLYS), 1100–1120 (GLAFAAMLPGIFVQVPSGVAS), and 1184–1204 (LGFTMIQVAIGITVGLFAATL).

It belongs to the ThrE exporter (TC 2.A.79) family.

The protein resides in the membrane. The sequence is that of Pheromone-regulated membrane protein 10 from Yarrowia lipolytica (strain CLIB 122 / E 150) (Yeast).